The chain runs to 278 residues: Potassium/proton antiporter CemA (278 aa).

Helical transmembrane passes span 61-81, 155-175, 203-223, and 238-258; these read IFLLLISPVLVNQASKFFDFG, AVKNILSDILSIAVFILLMIT, IILFTDMFVGFHSPHGWEVII, and FIFLFISTFPVILDTIFKYWI.

This sequence belongs to the CemA family.

The protein resides in the plastid. The protein localises to the chloroplast inner membrane. It catalyses the reaction K(+)(in) + H(+)(out) = K(+)(out) + H(+)(in). Functionally, contributes to K(+)/H(+) antiport activity by supporting proton efflux to control proton extrusion and homeostasis in chloroplasts in a light-dependent manner to modulate photosynthesis. Prevents excessive induction of non-photochemical quenching (NPQ) under continuous-light conditions. Indirectly promotes efficient inorganic carbon uptake into chloroplasts. This is Potassium/proton antiporter CemA from Porphyra purpurea (Red seaweed).